The primary structure comprises 252 residues: MTQTPEALTTEQFKQAIIDKGQYYHIYHPFHVMMYEGKATQQQIQAWVANRYYYQINIPLKDAAIMANCPDQRVRQEWIQRMIDQDGEYPDGGGREAWLRLAEAVGLSREQVISEELVLPGVRFAVDAYVNFARRASWREAASSSLTELFAPQIHQSRLESWPQHYPWIDDKGYEYFRSRLSQARRDVEHGLTITLDSFTTHEQQQRMLEILQFKLDILWSILDALTLAYVHNEAPYHSVTQERVWHKGLFK.

This sequence belongs to the PqqC family.

The enzyme catalyses 6-(2-amino-2-carboxyethyl)-7,8-dioxo-1,2,3,4,7,8-hexahydroquinoline-2,4-dicarboxylate + 3 O2 = pyrroloquinoline quinone + 2 H2O2 + 2 H2O + H(+). It participates in cofactor biosynthesis; pyrroloquinoline quinone biosynthesis. Functionally, ring cyclization and eight-electron oxidation of 3a-(2-amino-2-carboxyethyl)-4,5-dioxo-4,5,6,7,8,9-hexahydroquinoline-7,9-dicarboxylic-acid to PQQ. The sequence is that of Pyrroloquinoline-quinone synthase from Acinetobacter baumannii (strain AB307-0294).